Here is a 1411-residue protein sequence, read N- to C-terminus: DNA-directed RNA polymerase subunit beta' (1411 aa).

Residues C70, C72, C85, and C88 each contribute to the Zn(2+) site. The Mg(2+) site is built by D460, D462, and D464. 4 residues coordinate Zn(2+): C814, C889, C896, and C899. Polar residues predominate over residues 1387–1399 (RSTSSGTEITSPS). The disordered stretch occupies residues 1387–1411 (RSTSSGTEITSPSKDAIPLGSKVGF).

This sequence belongs to the RNA polymerase beta' chain family. In terms of assembly, the RNAP catalytic core consists of 2 alpha, 1 beta, 1 beta' and 1 omega subunit. When a sigma factor is associated with the core the holoenzyme is formed, which can initiate transcription. Mg(2+) serves as cofactor. Zn(2+) is required as a cofactor.

The catalysed reaction is RNA(n) + a ribonucleoside 5'-triphosphate = RNA(n+1) + diphosphate. Its function is as follows. DNA-dependent RNA polymerase catalyzes the transcription of DNA into RNA using the four ribonucleoside triphosphates as substrates. The protein is DNA-directed RNA polymerase subunit beta' of Xylella fastidiosa (strain M12).